Reading from the N-terminus, the 397-residue chain is CCA-adding enzyme (397 aa).

2 residues coordinate ATP: G32 and R35. Residues G32 and R35 each contribute to the CTP site. 2 residues coordinate Mg(2+): D45 and D47. 5 residues coordinate ATP: R116, D159, R162, R165, and R168. 5 residues coordinate CTP: R116, D159, R162, R165, and R168.

Belongs to the tRNA nucleotidyltransferase/poly(A) polymerase family. Bacterial CCA-adding enzyme type 3 subfamily. As to quaternary structure, homodimer. Requires Mg(2+) as cofactor.

It catalyses the reaction a tRNA precursor + 2 CTP + ATP = a tRNA with a 3' CCA end + 3 diphosphate. The enzyme catalyses a tRNA with a 3' CCA end + 2 CTP + ATP = a tRNA with a 3' CCACCA end + 3 diphosphate. In terms of biological role, catalyzes the addition and repair of the essential 3'-terminal CCA sequence in tRNAs without using a nucleic acid template. Adds these three nucleotides in the order of C, C, and A to the tRNA nucleotide-73, using CTP and ATP as substrates and producing inorganic pyrophosphate. tRNA 3'-terminal CCA addition is required both for tRNA processing and repair. Also involved in tRNA surveillance by mediating tandem CCA addition to generate a CCACCA at the 3' terminus of unstable tRNAs. While stable tRNAs receive only 3'-terminal CCA, unstable tRNAs are marked with CCACCA and rapidly degraded. The polypeptide is CCA-adding enzyme (Latilactobacillus sakei subsp. sakei (strain 23K) (Lactobacillus sakei subsp. sakei)).